A 402-amino-acid polypeptide reads, in one-letter code: Tryptophan synthase beta chain (402 aa).

Position 91 is an N6-(pyridoxal phosphate)lysine (Lys91).

This sequence belongs to the TrpB family. Tetramer of two alpha and two beta chains. It depends on pyridoxal 5'-phosphate as a cofactor.

It carries out the reaction (1S,2R)-1-C-(indol-3-yl)glycerol 3-phosphate + L-serine = D-glyceraldehyde 3-phosphate + L-tryptophan + H2O. The protein operates within amino-acid biosynthesis; L-tryptophan biosynthesis; L-tryptophan from chorismate: step 5/5. Functionally, the beta subunit is responsible for the synthesis of L-tryptophan from indole and L-serine. This chain is Tryptophan synthase beta chain, found in Streptococcus thermophilus (strain CNRZ 1066).